We begin with the raw amino-acid sequence, 601 residues long: uncharacterized protein (601 aa).

Positions 1–24 (MKLSSLPSGLGLASLLGLISSATA) are cleaved as a signal peptide.

Its subcellular location is the membrane. This is an uncharacterized protein from Schizosaccharomyces pombe (strain 972 / ATCC 24843) (Fission yeast).